Reading from the N-terminus, the 63-residue chain is ATP synthase F(0) complex subunit 8 (63 aa).

A helical transmembrane segment spans residues 8 to 24; sequence MWLLTILSMLLTLFVLF. Position 57 is an N6-acetyllysine (Lys-57).

This sequence belongs to the ATPase protein 8 family. In terms of assembly, component of the ATP synthase complex composed at least of ATP5F1A/subunit alpha, ATP5F1B/subunit beta, ATP5MC1/subunit c (homooctomer), MT-ATP6/subunit a, MT-ATP8/subunit 8, ATP5ME/subunit e, ATP5MF/subunit f, ATP5MG/subunit g, ATP5MK/subunit k, ATP5MJ/subunit j, ATP5F1C/subunit gamma, ATP5F1D/subunit delta, ATP5F1E/subunit epsilon, ATP5PF/subunit F6, ATP5PB/subunit b, ATP5PD/subunit d, ATP5PO/subunit OSCP. ATP synthase complex consists of a soluble F(1) head domain (subunits alpha(3) and beta(3)) - the catalytic core - and a membrane F(0) domain - the membrane proton channel (subunits c, a, 8, e, f, g, k and j). These two domains are linked by a central stalk (subunits gamma, delta, and epsilon) rotating inside the F1 region and a stationary peripheral stalk (subunits F6, b, d, and OSCP). Interacts with PRICKLE3.

It is found in the mitochondrion membrane. Functionally, subunit 8, of the mitochondrial membrane ATP synthase complex (F(1)F(0) ATP synthase or Complex V) that produces ATP from ADP in the presence of a proton gradient across the membrane which is generated by electron transport complexes of the respiratory chain. ATP synthase complex consist of a soluble F(1) head domain - the catalytic core - and a membrane F(1) domain - the membrane proton channel. These two domains are linked by a central stalk rotating inside the F(1) region and a stationary peripheral stalk. During catalysis, ATP synthesis in the catalytic domain of F(1) is coupled via a rotary mechanism of the central stalk subunits to proton translocation. In vivo, can only synthesize ATP although its ATP hydrolase activity can be activated artificially in vitro. Part of the complex F(0) domain. This chain is ATP synthase F(0) complex subunit 8, found in Balaenoptera physalus (Fin whale).